The sequence spans 179 residues: Protein GrpE (179 aa).

The disordered stretch occupies residues 1-20; that stretch reads MSEETKEEIKNEKVDEEVTE.

It belongs to the GrpE family. Homodimer.

The protein localises to the cytoplasm. Functionally, participates actively in the response to hyperosmotic and heat shock by preventing the aggregation of stress-denatured proteins, in association with DnaK and GrpE. It is the nucleotide exchange factor for DnaK and may function as a thermosensor. Unfolded proteins bind initially to DnaJ; upon interaction with the DnaJ-bound protein, DnaK hydrolyzes its bound ATP, resulting in the formation of a stable complex. GrpE releases ADP from DnaK; ATP binding to DnaK triggers the release of the substrate protein, thus completing the reaction cycle. Several rounds of ATP-dependent interactions between DnaJ, DnaK and GrpE are required for fully efficient folding. The protein is Protein GrpE of Lactococcus lactis subsp. cremoris (strain MG1363).